Reading from the N-terminus, the 71-residue chain is Large ribosomal subunit protein bL31 (71 aa).

Residues C16, C18, C37, and C40 each contribute to the Zn(2+) site.

This sequence belongs to the bacterial ribosomal protein bL31 family. Type A subfamily. In terms of assembly, part of the 50S ribosomal subunit. It depends on Zn(2+) as a cofactor.

Functionally, binds the 23S rRNA. The protein is Large ribosomal subunit protein bL31 of Pseudoalteromonas atlantica (strain T6c / ATCC BAA-1087).